Reading from the N-terminus, the 432-residue chain is Lysosomal acid phosphatase (432 aa).

The N-terminal stretch at 1–32 is a signal peptide; it reads MADGSCLGSGPQLGLIALLVVLLFSAVPLAQS. Residues 33-384 lie on the Lumenal side of the membrane; that stretch reads RELRFVTLVY…TTSFIMTEET (352 aa). H44 acts as the Nucleophile in catalysis. Residues N94, N135, N179, N193, and N269 are each glycosylated (N-linked (GlcNAc...) asparagine). 3 disulfide bridges follow: C161-C373, C214-C313, and C348-C352. Residue D290 is the Proton donor of the active site. 2 N-linked (GlcNAc...) asparagine glycosylation sites follow: N325 and N334. A helical membrane pass occupies residues 385 to 405; the sequence is IIGLTIGAIALFIIIVVLMLL. At 406-432 the chain is on the cytoplasmic side; it reads SCNEPKDDGYQHVSDEGDDHETKGLAM.

This sequence belongs to the histidine acid phosphatase family. The membrane-bound form is converted to the soluble form by sequential proteolytic processing. First, the C-terminal cytoplasmic tail is removed. Cleavage by a lysosomal protease releases the soluble form in the lysosome lumen.

The protein localises to the lysosome membrane. It is found in the lysosome lumen. It catalyses the reaction a phosphate monoester + H2O = an alcohol + phosphate. In Xenopus laevis (African clawed frog), this protein is Lysosomal acid phosphatase (acp2).